We begin with the raw amino-acid sequence, 394 residues long: Elongation factor Tu (394 aa).

One can recognise a tr-type G domain in the interval 10–204 (KPHVNVGTIG…HLDNYIPEPE (195 aa)). Residues 19–26 (GHVDHGKT) form a G1 region. GTP is bound at residue 19–26 (GHVDHGKT). Position 26 (Thr-26) interacts with Mg(2+). Residues 60 to 64 (GITIN) are G2. Residues 81-84 (DCPG) are G3. GTP-binding positions include 81–85 (DCPGH) and 136–139 (NKCD). The interval 136-139 (NKCD) is G4. The G5 stretch occupies residues 174–176 (SAL).

It belongs to the TRAFAC class translation factor GTPase superfamily. Classic translation factor GTPase family. EF-Tu/EF-1A subfamily. Monomer.

The protein resides in the cytoplasm. It catalyses the reaction GTP + H2O = GDP + phosphate + H(+). In terms of biological role, GTP hydrolase that promotes the GTP-dependent binding of aminoacyl-tRNA to the A-site of ribosomes during protein biosynthesis. The sequence is that of Elongation factor Tu from Histophilus somni (strain 129Pt) (Haemophilus somnus).